The following is a 366-amino-acid chain: Probable trehalose-phosphate phosphatase 3 (366 aa).

The protein belongs to the trehalose phosphatase family. Requires a divalent metal cation as cofactor.

The catalysed reaction is alpha,alpha-trehalose 6-phosphate + H2O = alpha,alpha-trehalose + phosphate. Its pathway is glycan biosynthesis; trehalose biosynthesis. Its function is as follows. Removes the phosphate from trehalose 6-phosphate to produce free trehalose. Trehalose accumulation in plant may improve abiotic stress tolerance. The polypeptide is Probable trehalose-phosphate phosphatase 3 (TPP3) (Oryza sativa subsp. japonica (Rice)).